Consider the following 525-residue polypeptide: GMP synthase [glutamine-hydrolyzing] (525 aa).

Positions 9–207 constitute a Glutamine amidotransferase type-1 domain; it reads RILILDFGSQ…VRDICQCEAL (199 aa). Cysteine 86 (nucleophile) is an active-site residue. Active-site residues include histidine 181 and glutamate 183. Residues 208–400 enclose the GMPS ATP-PPase domain; sequence WTPAKIIDDA…LGLPYDMLYR (193 aa). 235–241 lines the ATP pocket; the sequence is SGGVDSS.

As to quaternary structure, homodimer.

It catalyses the reaction XMP + L-glutamine + ATP + H2O = GMP + L-glutamate + AMP + diphosphate + 2 H(+). Its pathway is purine metabolism; GMP biosynthesis; GMP from XMP (L-Gln route): step 1/1. Catalyzes the synthesis of GMP from XMP. This chain is GMP synthase [glutamine-hydrolyzing], found in Escherichia coli O17:K52:H18 (strain UMN026 / ExPEC).